The primary structure comprises 601 residues: MAASADLSKSSPTPNGIPSSDPASDAMDPFHACSILKQLKTMYDEGQLTDIVVEVDHGKTFSCHRNVLAAISPYFRSMFTSGLTESTQKEVRIVGVEAESMDLVLNYAYTSRVILTEANVQALFTAASIFQIPSIQDQCAKYMISHLDPQNSIGVFIFADHYGHQELGDRSKEYIRKKFLCVTKEQEFLQLTKDQLISILDSDDLNVDREEHVYESIIRWFEHEQNEREVHLPEIFAKCIRFPLMEDTFIEKIPPQFAQAIAKSCVEKGPSNTNGCTQRLGMTASEMIICFDAAHKHSGKKQTVPCLDIVTGRVFKLCKPPNDLREVGILVSPDNDIYIAGGYRPSSSEVSIDHKAENDFWMYDHSTNRWLSKPSLLRARIGCKLVYCCGKMYAIGGRVYEGDGRNSLKSVECYDSRENCWTTVCAMPVAMEFHNAVEYKEKIYVLQGEFFLFYEPQKDYWGFLTPMTVPRIQGLAAVYKDSIYYIAGTCGNHQRMFTVEAYDIELNKWTRKKDFPCDQSINPYLKLVLFQNKLHLFVRATQVTVEEHVFRTSRKNSLYQYDDIADQWMKVYETPDRLWDLGRHFECAVAKLYPQCLQKVL.

Residues 1–25 are disordered; that stretch reads MAASADLSKSSPTPNGIPSSDPASD. Positions 7–22 are enriched in polar residues; sequence LSKSSPTPNGIPSSDP. The region spanning 49–117 is the BTB domain; it reads TDIVVEVDHG…AYTSRVILTE (69 aa). A BACK domain is found at 153-252; that stretch reads IGVFIFADHY…PLMEDTFIEK (100 aa). Kelch repeat units lie at residues 336–390, 391–441, 443–481, 483–532, and 542–588; these read DIYI…YCCG, KMYA…EYKE, IYVLQGEFFLFYEPQKDYWGFLTPMTVPRIQGLAAVYKD, IYYI…LFQN, and QVTV…FECA.

Belongs to the KBTBD8 family. In terms of assembly, component of the BCR(KBTBD8) E3 ubiquitin ligase complex, at least composed of CUL3, KBTBD8 and RBX1.

Its subcellular location is the cytoplasm. The protein resides in the cytoskeleton. It localises to the spindle. It is found in the golgi apparatus. Functionally, substrate-specific adapter of a BCR (BTB-CUL3-RBX1) E3 ubiquitin ligase complex that acts as a regulator of neural crest specification. The BCR(KBTBD8) complex acts by mediating monoubiquitination of NOLC1 and TCOF1: monoubiquitination promotes the formation of a NOLC1-TCOF1 complex that acts as a platform to connect RNA polymerase I with enzymes responsible for ribosomal processing and modification, leading to remodel the translational program of differentiating cells in favor of neural crest specification. The chain is Kelch repeat and BTB domain-containing protein 8 (KBTBD8) from Homo sapiens (Human).